We begin with the raw amino-acid sequence, 438 residues long: Probable tRNA pseudouridine synthase D (438 aa).

The Nucleophile role is filled by aspartate 86. Residues 165 to 390 form the TRUD domain; the sequence is GVPNFFGIQR…SKGTRRELLL (226 aa).

The protein belongs to the pseudouridine synthase TruD family.

It catalyses the reaction uridine(13) in tRNA = pseudouridine(13) in tRNA. In terms of biological role, could be responsible for synthesis of pseudouridine from uracil-13 in transfer RNAs. The sequence is that of Probable tRNA pseudouridine synthase D from Methanosarcina barkeri (strain Fusaro / DSM 804).